The sequence spans 297 residues: 4-diphosphocytidyl-2-C-methyl-D-erythritol kinase (297 aa).

Lys19 is an active-site residue. 105 to 115 (PIASGIGGGSA) contributes to the ATP binding site. Asp147 is a catalytic residue.

The protein belongs to the GHMP kinase family. IspE subfamily.

It carries out the reaction 4-CDP-2-C-methyl-D-erythritol + ATP = 4-CDP-2-C-methyl-D-erythritol 2-phosphate + ADP + H(+). It participates in isoprenoid biosynthesis; isopentenyl diphosphate biosynthesis via DXP pathway; isopentenyl diphosphate from 1-deoxy-D-xylulose 5-phosphate: step 3/6. In terms of biological role, catalyzes the phosphorylation of the position 2 hydroxy group of 4-diphosphocytidyl-2C-methyl-D-erythritol. The sequence is that of 4-diphosphocytidyl-2-C-methyl-D-erythritol kinase from Rhizobium etli (strain CIAT 652).